A 125-amino-acid chain; its full sequence is TSSK6-activating co-chaperone protein (125 aa).

Disordered stretches follow at residues 1–21 and 97–125; these read MEQH…ANAV and LAPG…QFSK. The segment covering 103–125 has biased composition (low complexity); sequence SNNSSLPALSPNPLLNHLPQFSK.

It belongs to the TSACC family. As to quaternary structure, interacts with HSP70. Associates with HSP90. Interacts with TSSK6; this interaction is direct and recruits TSACC to HSP90.

In terms of biological role, co-chaperone that facilitates HSP-mediated activation of TSSK6. This is TSSK6-activating co-chaperone protein (TSACC) from Macaca fascicularis (Crab-eating macaque).